Here is a 323-residue protein sequence, read N- to C-terminus: Beta-ketoacyl-[acyl-carrier-protein] synthase III (323 aa).

Active-site residues include Cys114 and His250. The interval 251 to 255 (QANLR) is ACP-binding. Asn280 is a catalytic residue.

This sequence belongs to the thiolase-like superfamily. FabH family. As to quaternary structure, homodimer.

Its subcellular location is the cytoplasm. It carries out the reaction malonyl-[ACP] + acetyl-CoA + H(+) = 3-oxobutanoyl-[ACP] + CO2 + CoA. It functions in the pathway lipid metabolism; fatty acid biosynthesis. Functionally, catalyzes the condensation reaction of fatty acid synthesis by the addition to an acyl acceptor of two carbons from malonyl-ACP. Catalyzes the first condensation reaction which initiates fatty acid synthesis and may therefore play a role in governing the total rate of fatty acid production. Possesses both acetoacetyl-ACP synthase and acetyl transacylase activities. Its substrate specificity determines the biosynthesis of branched-chain and/or straight-chain of fatty acids. This is Beta-ketoacyl-[acyl-carrier-protein] synthase III from Cereibacter sphaeroides (strain ATCC 17025 / ATH 2.4.3) (Rhodobacter sphaeroides).